Consider the following 148-residue polypeptide: Small ribosomal subunit protein eS19G (148 aa).

Belongs to the eukaryotic ribosomal protein eS19 family.

Its function is as follows. Elimination of the ALEP-1 gene from all somatic cells in its fully activate state may represent an alternative way to gene regulation. The protein is Small ribosomal subunit protein eS19G (RPS19G) of Ascaris suum (Pig roundworm).